We begin with the raw amino-acid sequence, 400 residues long: MRKLTILGATGSIGSSTLSVAKQNSDQFEVVALGAGTNVDKMLELCLEWKPKYVAMATQPAADELKELLSAHAINAEVFSGEDGLCHIAQLDEVDTVMAAIVGAAGLLPTMSAVKAGKRILLANKEALVMSGQLFIDAVEKYGAELLPVDSEHNAIFQCLPQSIQTNLGRCDLEEHGVSSILLTGSGGPFRYTDVSELEAVTPEMAIAHPNWSMGPKISVDSATMMNKGLEYIEARWLFNASKDQLKVVIHPQSVIHSMVQYKDGSVLAQMGLPDMRTPIACTMSYPKRVDAGVEPLDFTKVGEFTFIAPDFARYPCLKLAIDACYLGQHATTGLNAANEQAVAAFLANKIKFTDIARINEAVLHKVCANFQNLELDSLESLIDLDRMARRYADEAINKV.

Threonine 10, glycine 11, serine 12, isoleucine 13, glycine 36, asparagine 38, and asparagine 124 together coordinate NADPH. Position 125 (lysine 125) interacts with 1-deoxy-D-xylulose 5-phosphate. Glutamate 126 is a binding site for NADPH. Residue aspartate 150 participates in Mn(2+) binding. Residues serine 151, glutamate 152, serine 186, and histidine 209 each coordinate 1-deoxy-D-xylulose 5-phosphate. A Mn(2+)-binding site is contributed by glutamate 152. Glycine 215 contributes to the NADPH binding site. The 1-deoxy-D-xylulose 5-phosphate site is built by serine 222, asparagine 227, lysine 228, and glutamate 231. Residue glutamate 231 participates in Mn(2+) binding.

This sequence belongs to the DXR family. Mg(2+) serves as cofactor. Requires Mn(2+) as cofactor.

It catalyses the reaction 2-C-methyl-D-erythritol 4-phosphate + NADP(+) = 1-deoxy-D-xylulose 5-phosphate + NADPH + H(+). It participates in isoprenoid biosynthesis; isopentenyl diphosphate biosynthesis via DXP pathway; isopentenyl diphosphate from 1-deoxy-D-xylulose 5-phosphate: step 1/6. Its function is as follows. Catalyzes the NADPH-dependent rearrangement and reduction of 1-deoxy-D-xylulose-5-phosphate (DXP) to 2-C-methyl-D-erythritol 4-phosphate (MEP). In Aliivibrio fischeri (strain ATCC 700601 / ES114) (Vibrio fischeri), this protein is 1-deoxy-D-xylulose 5-phosphate reductoisomerase.